A 340-amino-acid chain; its full sequence is Glycerol-3-phosphate dehydrogenase [NAD(P)+] (340 aa).

Serine 13, tryptophan 14, and lysine 108 together coordinate NADPH. Residues lysine 108, glycine 139, and serine 141 each contribute to the sn-glycerol 3-phosphate site. NADPH is bound at residue alanine 143. Residues lysine 194, aspartate 247, serine 257, arginine 258, and asparagine 259 each contribute to the sn-glycerol 3-phosphate site. Lysine 194 serves as the catalytic Proton acceptor. Arginine 258 provides a ligand contact to NADPH. NADPH is bound by residues valine 282 and glutamate 284.

This sequence belongs to the NAD-dependent glycerol-3-phosphate dehydrogenase family.

It is found in the cytoplasm. It catalyses the reaction sn-glycerol 3-phosphate + NAD(+) = dihydroxyacetone phosphate + NADH + H(+). It carries out the reaction sn-glycerol 3-phosphate + NADP(+) = dihydroxyacetone phosphate + NADPH + H(+). The protein operates within membrane lipid metabolism; glycerophospholipid metabolism. Catalyzes the reduction of the glycolytic intermediate dihydroxyacetone phosphate (DHAP) to sn-glycerol 3-phosphate (G3P), the key precursor for phospholipid synthesis. The chain is Glycerol-3-phosphate dehydrogenase [NAD(P)+] from Streptococcus sanguinis (strain SK36).